The chain runs to 382 residues: Dual-specificity RNA methyltransferase RlmN (382 aa).

The active-site Proton acceptor is the Glu-96. The Radical SAM core domain maps to 102-342 (QGKRGTLCVS…VRTTRGEDID (241 aa)). Cys-109 and Cys-345 are joined by a disulfide. Residues Cys-116, Cys-120, and Cys-123 each contribute to the [4Fe-4S] cluster site. S-adenosyl-L-methionine-binding positions include 170 to 171 (GE), Ser-202, 224 to 226 (SLH), and Asn-302. The active-site S-methylcysteine intermediate is the Cys-345.

It belongs to the radical SAM superfamily. RlmN family. Requires [4Fe-4S] cluster as cofactor.

The protein resides in the cytoplasm. The catalysed reaction is adenosine(2503) in 23S rRNA + 2 reduced [2Fe-2S]-[ferredoxin] + 2 S-adenosyl-L-methionine = 2-methyladenosine(2503) in 23S rRNA + 5'-deoxyadenosine + L-methionine + 2 oxidized [2Fe-2S]-[ferredoxin] + S-adenosyl-L-homocysteine. It catalyses the reaction adenosine(37) in tRNA + 2 reduced [2Fe-2S]-[ferredoxin] + 2 S-adenosyl-L-methionine = 2-methyladenosine(37) in tRNA + 5'-deoxyadenosine + L-methionine + 2 oxidized [2Fe-2S]-[ferredoxin] + S-adenosyl-L-homocysteine. In terms of biological role, specifically methylates position 2 of adenine 2503 in 23S rRNA and position 2 of adenine 37 in tRNAs. m2A2503 modification seems to play a crucial role in the proofreading step occurring at the peptidyl transferase center and thus would serve to optimize ribosomal fidelity. The polypeptide is Dual-specificity RNA methyltransferase RlmN (Pseudomonas syringae pv. tomato (strain ATCC BAA-871 / DC3000)).